The following is a 208-amino-acid chain: Uracil phosphoribosyltransferase (208 aa).

5-phospho-alpha-D-ribose 1-diphosphate is bound by residues Arg-78, Arg-103, and 130–138 (DPMLATGGS). Uracil-binding positions include Ile-193 and 198 to 200 (GDA). Asp-199 contributes to the 5-phospho-alpha-D-ribose 1-diphosphate binding site.

Belongs to the UPRTase family. Mg(2+) is required as a cofactor.

It carries out the reaction UMP + diphosphate = 5-phospho-alpha-D-ribose 1-diphosphate + uracil. It functions in the pathway pyrimidine metabolism; UMP biosynthesis via salvage pathway; UMP from uracil: step 1/1. Allosterically activated by GTP. In terms of biological role, catalyzes the conversion of uracil and 5-phospho-alpha-D-ribose 1-diphosphate (PRPP) to UMP and diphosphate. The chain is Uracil phosphoribosyltransferase from Acholeplasma laidlawii (strain PG-8A).